A 121-amino-acid polypeptide reads, in one-letter code: Large ribosomal subunit protein bL12 (121 aa).

Belongs to the bacterial ribosomal protein bL12 family. As to quaternary structure, homodimer. Part of the ribosomal stalk of the 50S ribosomal subunit. Forms a multimeric L10(L12)X complex, where L10 forms an elongated spine to which 2 to 4 L12 dimers bind in a sequential fashion. Binds GTP-bound translation factors.

Functionally, forms part of the ribosomal stalk which helps the ribosome interact with GTP-bound translation factors. Is thus essential for accurate translation. The chain is Large ribosomal subunit protein bL12 from Lactococcus lactis subsp. cremoris (strain MG1363).